Reading from the N-terminus, the 1362-residue chain is DNA-directed RNA polymerase subunit beta (1362 aa).

It belongs to the RNA polymerase beta chain family. The RNAP catalytic core consists of 2 alpha, 1 beta, 1 beta' and 1 omega subunit. When a sigma factor is associated with the core the holoenzyme is formed, which can initiate transcription.

It carries out the reaction RNA(n) + a ribonucleoside 5'-triphosphate = RNA(n+1) + diphosphate. In terms of biological role, DNA-dependent RNA polymerase catalyzes the transcription of DNA into RNA using the four ribonucleoside triphosphates as substrates. The protein is DNA-directed RNA polymerase subunit beta of Acidithiobacillus ferrooxidans (strain ATCC 23270 / DSM 14882 / CIP 104768 / NCIMB 8455) (Ferrobacillus ferrooxidans (strain ATCC 23270)).